Reading from the N-terminus, the 499-residue chain is Low-affinity inorganic phosphate transporter PitA (499 aa).

Topologically, residues 1–4 are periplasmic; that stretch reads MLHL. A helical transmembrane segment spans residues 5–25; sequence FAGLDLHTGLLLLLALAFVLF. Residues 26-51 are Cytoplasmic-facing; it reads YEAINGFHDTANAVATVIYTRAMRSQ. A helical transmembrane segment spans residues 52-72; sequence LAVVMAAVFNFLGVLLGGLSV. The Periplasmic segment spans residues 73 to 93; the sequence is AYAIVHMLPTDLLLNMGSSHG. A helical membrane pass occupies residues 94 to 114; that stretch reads LAMVFSMLLAAIIWNLGTWYF. Topologically, residues 115-123 are cytoplasmic; the sequence is GLPASSSHT. The helical transmembrane segment at 124 to 144 threads the bilayer; that stretch reads LIGAIIGIGLTNALMTGTSVV. The Periplasmic portion of the chain corresponds to 145 to 154; that stretch reads DALNIPKVLS. The helical transmembrane segment at 155 to 175 threads the bilayer; sequence IFGSLIVSPIVGLVFAGGLIF. At 176 to 206 the chain is on the cytoplasmic side; that stretch reads LLRRYWSGTKKRARIHLTPAEREKKDGKKKP. The helical transmembrane segment at 207–227 threads the bilayer; sequence PFWTRIALILSAIGVAFSHGA. Residues 228 to 232 lie on the Periplasmic side of the membrane; the sequence is NDGQK. The chain crosses the membrane as a helical span at residues 233 to 253; sequence GIGLVMLVLIGVAPAGFVVNM. The Cytoplasmic segment spans residues 254-381; the sequence is NATGYEITRT…KSDMLSTIEY (128 aa). Residues 382-402 form a helical membrane-spanning segment; sequence APVWIIMAVALALGIGTMIGW. Residues 403-429 are Periplasmic-facing; it reads RRVATTIGEKIGKKGMTYAQGMSAQMT. Residues 430-450 traverse the membrane as a helical segment; the sequence is AAVSIGLASYTGMPVSTTHVL. Residues 451–472 are Cytoplasmic-facing; that stretch reads SSSVAGTMVVDGGGLQRKTVTS. A helical membrane pass occupies residues 473 to 493; the sequence is ILMAWVFTLPAAVLLSGGLYW. Over 494-499 the chain is Periplasmic; it reads LSLQFL.

The protein belongs to the inorganic phosphate transporter (PiT) (TC 2.A.20) family. Pit subfamily.

It is found in the cell inner membrane. The enzyme catalyses phosphate(in) + H(+)(in) = phosphate(out) + H(+)(out). Its function is as follows. Low-affinity inorganic phosphate transporter. In Escherichia coli O157:H7, this protein is Low-affinity inorganic phosphate transporter PitA (pitA).